A 43-amino-acid chain; its full sequence is Potassium channel toxin gamma-KTx 4.1 (43 aa).

Intrachain disulfides connect cysteine 5–cysteine 23, cysteine 11–cysteine 34, cysteine 20–cysteine 39, and cysteine 24–cysteine 41.

This sequence belongs to the ergtoxin family. Gamma-KTx 4 subfamily. Expressed by the venom gland.

Its subcellular location is the secreted. Functionally, reversibly blocks Kv11/ERG potassium channels. The protein is Potassium channel toxin gamma-KTx 4.1 of Centruroides limpidus (Mexican scorpion).